We begin with the raw amino-acid sequence, 1350 residues long: Tectonin beta-propeller repeat-containing protein (1350 aa).

TECPR repeat units lie at residues 23-59, 233-271, 280-320, and 336-371; these read GAWR…VHVH, LRWT…VRTG, DSWL…FRRG, and KGWV…HRSG. Residues 396 to 415 are compositionally biased toward low complexity; the sequence is SSLSIVSRKSGGSSSTPGSK. 2 disordered regions span residues 396 to 420 and 671 to 691; these read SSLS…QSFS and SGSG…SGTF. A Galectin domain is found at 816 to 955; the sequence is YYNTLYNGMP…RIKLFNVLYR (140 aa). 4 TECPR repeats span residues 966-1000, 1187-1223, 1232-1269, and 1278-1322; these read MHWR…VYNG, DAWE…FRYG, DAWQ…VRKE, and SHWQ…RRCG.

This sequence belongs to the TECPR1 family.

Functionally, involved in peroxisome biogenesis. In Drosophila melanogaster (Fruit fly), this protein is Tectonin beta-propeller repeat-containing protein (Pex23).